Consider the following 375-residue polypeptide: Peptide-N(4)-(N-acetyl-beta-glucosaminyl)asparagine amidase (375 aa).

Cys-129, Cys-132, Cys-163, and Cys-166 together coordinate Zn(2+). Cys-189 acts as the Nucleophile in catalysis. Catalysis depends on residues His-219 and Asp-236. Position 239 (Glu-239) interacts with substrate. Positions Lys-345–Glu-375 are disordered. Residues Glu-364–Glu-375 show a composition bias toward basic and acidic residues.

The protein belongs to the transglutaminase-like superfamily. PNGase family. The cofactor is Zn(2+).

Its subcellular location is the cytoplasm. The enzyme catalyses Hydrolysis of an N(4)-(acetyl-beta-D-glucosaminyl)asparagine residue in which the glucosamine residue may be further glycosylated, to yield a (substituted) N-acetyl-beta-D-glucosaminylamine and a peptide containing an aspartate residue.. In terms of biological role, specifically deglycosylates the denatured form of N-linked glycoproteins in the cytoplasm and assists their proteasome-mediated degradation. Cleaves the beta-aspartyl-glucosamine (GlcNAc) of the glycan and the amide side chain of Asn, converting Asn to Asp. Prefers proteins containing high-mannose over those bearing complex type oligosaccharides. Can recognize misfolded proteins in the endoplasmic reticulum that are exported to the cytosol to be destroyed and deglycosylate them, while it has no activity toward native proteins. Deglycosylation is a prerequisite for subsequent proteasome-mediated degradation of some, but not all, misfolded glycoproteins. The sequence is that of Peptide-N(4)-(N-acetyl-beta-glucosaminyl)asparagine amidase (PNG1) from Debaryomyces hansenii (strain ATCC 36239 / CBS 767 / BCRC 21394 / JCM 1990 / NBRC 0083 / IGC 2968) (Yeast).